The chain runs to 24 residues: Defensin D5 (24 aa).

It belongs to the DEFL family. Group IV subfamily. As to expression, distributed in the epidermal cell layer of leaves and in the subepidermal layer region of stems. Not in roots.

Its subcellular location is the secreted. It localises to the cell wall. Functionally, antimicrobial peptide. Active against Fusarium spp., Gram-positive and Gram-negative bacterial pathogens. The sequence is that of Defensin D5 from Spinacia oleracea (Spinach).